We begin with the raw amino-acid sequence, 478 residues long: MGKKNKQFVEKITAMEDDFAQWYTDVVKQADLVDYGQVRGTMIIKPYGYAIWENIKNELDRMFKETGHTNVAFPLFIPESLLQKEKDHVEGFAPEVAWVTHGGEEELTERIAVRPTSEVLFCDYYSNNIHSYRDLPKLYNQWGNVVRWEKTTRPFLRSSEFHWQEGHTAHATDEEATEETNRMLETYAKLVEEYLAVPVLKGRKTDKEKFAGAKFTLTIEALMHDGKALQSGTSHHFGTGFAEAFDINYLDKDGKSQFVHQTSWGLSTRIMGALIMVHGDNRGLVVPPKIAPTQAMIVPIAQHKEGVLDKAYELRDKLAKVARVDIDGSDKMPGWKFNEYEMKGIPVRVEMGPKDIEKEQVVLVRRDTGEKEFVPVAEVETRLVELLDEVQSNLYQRALDHRNEMTTVAKDMDEFKEKIEEGGFIKAMWCGDVSCEESIKEETTATSRCIPYEEEKVADTCVCCGKKAKELVYWARAY.

This sequence belongs to the class-II aminoacyl-tRNA synthetase family. ProS type 3 subfamily. Homodimer.

Its subcellular location is the cytoplasm. The catalysed reaction is tRNA(Pro) + L-proline + ATP = L-prolyl-tRNA(Pro) + AMP + diphosphate. Catalyzes the attachment of proline to tRNA(Pro) in a two-step reaction: proline is first activated by ATP to form Pro-AMP and then transferred to the acceptor end of tRNA(Pro). The sequence is that of Proline--tRNA ligase from Oceanobacillus iheyensis (strain DSM 14371 / CIP 107618 / JCM 11309 / KCTC 3954 / HTE831).